The sequence spans 60 residues: Large ribosomal subunit protein bL32 (60 aa).

The segment at 1–44 (MAVQQNKKSRSARDMRRSHDALEASTLSVEKTTGEVHLRHHVSP) is disordered. A compositionally biased stretch (basic and acidic residues) spans 11-22 (SARDMRRSHDAL).

This sequence belongs to the bacterial ribosomal protein bL32 family.

The sequence is that of Large ribosomal subunit protein bL32 from Pseudomonas fluorescens (strain SBW25).